The primary structure comprises 502 residues: 4,4'-diapophytoene desaturase (4,4'-diaponeurosporene-forming) (502 aa).

Residue 5–17 (VIGAGVTGLAAAA) coordinates FAD.

Belongs to the carotenoid/retinoid oxidoreductase family. CrtN subfamily.

It catalyses the reaction 15-cis-4,4'-diapophytoene + 3 FAD + 3 H(+) = all-trans-4,4'-diaponeurosporene + 3 FADH2. The protein operates within carotenoid biosynthesis; staphyloxanthin biosynthesis; staphyloxanthin from farnesyl diphosphate: step 2/5. Functionally, involved in the biosynthesis of the yellow-orange carotenoid staphyloxanthin, which plays a role in the virulence via its protective function against oxidative stress. Catalyzes three successive dehydrogenation reactions that lead to the introduction of three double bonds into 4,4'-diapophytoene (dehydrosqualene), with 4,4'-diapophytofluene and 4,4'-diapo-zeta-carotene as intermediates, and 4,4'-diaponeurosporene (the major deep-yellow pigment in staphylococci strains) as the end product. This chain is 4,4'-diapophytoene desaturase (4,4'-diaponeurosporene-forming), found in Staphylococcus aureus (strain MW2).